The primary structure comprises 398 residues: MNIHEYQAKRLLHTYGAPIANGVAVYSVEQAEEWAKTLPGPLYVVKSQIHAGGRGKGKFKELPADAKGGVRLAKSVEEVVANAKEMLGNTLVTKQTGPAGKQVNRLYIEDGADIDRELYLSILIDRTVGRPAFVVSTEGGMDIEAVAEETPEKIVTVAIDPAKGVTDEDASKLADALKLEGQAREDGVKLFPILYKAFTEKDMSLLEINPLIVMTDGRVRVLDAKVSFDGNALFRHPDIQELRDLSEEDEKEIEASKYDLAYVALDGNIGCMVNGAGLAMATMDIIKLYGAEPANFLDVGGGASKEKVTAAFKIITADPAVQGILVNIFGGIMKCDVIAEGVIAAVKEVGLKVPLVVRLEGTNVELGKKIINESGLNVISADDLDDAAQKIVAAVKGN.

The ATP-grasp domain maps to 9 to 254 (KRLLHTYGAP…LSEEDEKEIE (246 aa)). ATP contacts are provided by residues Lys-46, 53–55 (GRG), Glu-109, Ala-112, and Glu-117. Asn-209 and Asp-223 together coordinate Mg(2+). Substrate is bound by residues Asn-274 and 331 to 333 (GIM).

It belongs to the succinate/malate CoA ligase beta subunit family. As to quaternary structure, heterotetramer of two alpha and two beta subunits. Mg(2+) is required as a cofactor.

The enzyme catalyses succinate + ATP + CoA = succinyl-CoA + ADP + phosphate. It catalyses the reaction GTP + succinate + CoA = succinyl-CoA + GDP + phosphate. The protein operates within carbohydrate metabolism; tricarboxylic acid cycle; succinate from succinyl-CoA (ligase route): step 1/1. In terms of biological role, succinyl-CoA synthetase functions in the citric acid cycle (TCA), coupling the hydrolysis of succinyl-CoA to the synthesis of either ATP or GTP and thus represents the only step of substrate-level phosphorylation in the TCA. The beta subunit provides nucleotide specificity of the enzyme and binds the substrate succinate, while the binding sites for coenzyme A and phosphate are found in the alpha subunit. This chain is Succinate--CoA ligase [ADP-forming] subunit beta, found in Brucella anthropi (strain ATCC 49188 / DSM 6882 / CCUG 24695 / JCM 21032 / LMG 3331 / NBRC 15819 / NCTC 12168 / Alc 37) (Ochrobactrum anthropi).